We begin with the raw amino-acid sequence, 157 residues long: Large ribosomal subunit protein uL11 (157 aa).

2 disordered regions span residues 1-28 and 138-157; these read MAGT…GPTP and NNPR…DILK. Residues 139 to 157 show a composition bias toward basic and acidic residues; that stretch reads NPREFKSRMEDGEYDDILK.

This sequence belongs to the universal ribosomal protein uL11 family. As to quaternary structure, part of the ribosomal stalk of the 50S ribosomal subunit. Interacts with L10 and the large rRNA to form the base of the stalk. L10 forms an elongated spine to which L12 dimers bind in a sequential fashion forming a multimeric L10(L12)X complex.

Forms part of the ribosomal stalk which helps the ribosome interact with GTP-bound translation factors. This Haloquadratum walsbyi (strain DSM 16790 / HBSQ001) protein is Large ribosomal subunit protein uL11.